A 533-amino-acid polypeptide reads, in one-letter code: NEDD8-activating enzyme E1 regulatory subunit (533 aa).

Residues 330 to 343 form an interaction with uba3 region; it reads DMIADSDKFIKLQN.

The protein belongs to the ubiquitin-activating E1 family. ULA1 subfamily. As to quaternary structure, heterodimer of uba3 and nae1. The complex binds nedd8 and ube2m.

It functions in the pathway protein modification; protein neddylation. Functionally, regulatory subunit of the dimeric uba3-nae1 E1 enzyme. E1 activates nedd8 by first adenylating its C-terminal glycine residue with ATP, thereafter linking this residue to the side chain of the catalytic cysteine, yielding a nedd8-uba3 thioester and free AMP. E1 finally transfers nedd8 to the catalytic cysteine of ube2m. The covalent attachment of nedd8 to target proteins is known as 'neddylation' and the process is involved in the regulation of cell growth, viability and development. This Xenopus laevis (African clawed frog) protein is NEDD8-activating enzyme E1 regulatory subunit (nae1).